The following is a 1008-amino-acid chain: Retinoblastoma-related protein (1008 aa).

The tract at residues 375–394 (KRKVDSMTSPTKTITSPLSP) is disordered. The span at 380–392 (SMTSPTKTITSPL) shows a compositional bias: polar residues. Positions 404–605 (TPVSTAMTTA…EKGSSMYNSL (202 aa)) are domain A. Residues 404–853 (TPVSTAMTTA…NEVFIPSVKP (450 aa)) are pocket. The tract at residues 606-722 (TIARPNLSNE…HPTRGETCGE (117 aa)) is spacer. Residues 723 to 853 (TAVNLFFSKI…NEVFIPSVKP (131 aa)) are domain B. Disordered stretches follow at residues 865 to 899 (KNPN…SLPD) and 988 to 1008 (LQNG…LKTE).

It belongs to the retinoblastoma protein (RB) family.

The protein localises to the nucleus. Its function is as follows. Regulator of biological processes that recruits a histone deacetylase to control gene transcription. May play a role in the entry into mitosis, negatively regulating the cell proliferation. Formation of stable complexes with geminiviridae replication-associated proteins may create a cellular environment which favors viral DNA replication. This Pilosella officinarum (Mouse-ear hawkweed) protein is Retinoblastoma-related protein (RBR).